Here is a 369-residue protein sequence, read N- to C-terminus: 3-isopropylmalate dehydrogenase (369 aa).

An NAD(+)-binding site is contributed by 77–90 (GPKYDVLDFSVKPE). Positions 97, 107, 135, and 226 each coordinate substrate. Mg(2+)-binding residues include Asp-226, Asp-250, and Asp-254. 289–301 (GSAPDIAGQGKAN) serves as a coordination point for NAD(+).

Belongs to the isocitrate and isopropylmalate dehydrogenases family. LeuB type 1 subfamily. As to quaternary structure, homodimer. Mg(2+) serves as cofactor. The cofactor is Mn(2+).

The protein resides in the cytoplasm. It carries out the reaction (2R,3S)-3-isopropylmalate + NAD(+) = 4-methyl-2-oxopentanoate + CO2 + NADH. It functions in the pathway amino-acid biosynthesis; L-leucine biosynthesis; L-leucine from 3-methyl-2-oxobutanoate: step 3/4. Its function is as follows. Catalyzes the oxidation of 3-carboxy-2-hydroxy-4-methylpentanoate (3-isopropylmalate) to 3-carboxy-4-methyl-2-oxopentanoate. The product decarboxylates to 4-methyl-2 oxopentanoate. This Cereibacter sphaeroides (strain ATCC 17023 / DSM 158 / JCM 6121 / CCUG 31486 / LMG 2827 / NBRC 12203 / NCIMB 8253 / ATH 2.4.1.) (Rhodobacter sphaeroides) protein is 3-isopropylmalate dehydrogenase.